A 456-amino-acid chain; its full sequence is Ribosome assembly protein METTL17, mitochondrial (456 aa).

The transit peptide at 1-19 (MAAALKCLLTLGRWCPGLG) directs the protein to the mitochondrion. Residues C333, C339, C347, and C404 each contribute to the [4Fe-4S] cluster site.

It belongs to the methyltransferase superfamily. Rsm22 family. Associates with the mitochondrial ribosome (mitoribosome).

It is found in the mitochondrion matrix. Mitochondrial ribosome (mitoribosome) assembly factor. Binds at the interface of the head and body domains of the mitochondrial small ribosomal subunit (mt-SSU), occluding the mRNA channel and preventing compaction of the head domain towards the body. Probable inactive methyltransferase: retains the characteristic folding and ability to bind S-adenosyl-L-methionine, but it probably lost its methyltransferase activity. The polypeptide is Ribosome assembly protein METTL17, mitochondrial (Homo sapiens (Human)).